Reading from the N-terminus, the 308-residue chain is RING-H2 finger protein ATL63 (308 aa).

The helical transmembrane segment at 29-49 (VLLAALVFLLLVVLFVLLLHF) threads the bilayer. The segment at 138 to 180 (CVICLGLWEAGDFGRKLRNCGHGFHVECIDMWLSSHSTCPLCR) adopts an RING-type; atypical zinc-finger fold. Residues 252-308 (VFDDDEEINDGGTRSDRRRSMSMTSSASSSLMRMLSSSSSRSERNKVFPTARQDSSK) form a disordered region. Positions 272 to 291 (MSMTSSASSSLMRMLSSSSS) are enriched in low complexity.

It belongs to the RING-type zinc finger family. ATL subfamily.

The protein localises to the membrane. It carries out the reaction S-ubiquitinyl-[E2 ubiquitin-conjugating enzyme]-L-cysteine + [acceptor protein]-L-lysine = [E2 ubiquitin-conjugating enzyme]-L-cysteine + N(6)-ubiquitinyl-[acceptor protein]-L-lysine.. The protein operates within protein modification; protein ubiquitination. This is RING-H2 finger protein ATL63 (ATL63) from Arabidopsis thaliana (Mouse-ear cress).